The sequence spans 512 residues: Serine/threonine-protein kinase grp (512 aa).

Residues Trp-22–Cys-279 form the Protein kinase domain. ATP contacts are provided by residues Leu-28 to Val-36 and Lys-51. The active-site Proton acceptor is Asp-143. The disordered stretch occupies residues Pro-335 to Gln-360.

The protein belongs to the protein kinase superfamily. CAMK Ser/Thr protein kinase family. NIM1 subfamily. Post-translationally, phosphorylated in a MEI-41/ATR dependent manner in response to DNA damage or the presence of unreplicated DNA.

The protein resides in the nucleus. It carries out the reaction L-seryl-[protein] + ATP = O-phospho-L-seryl-[protein] + ADP + H(+). The enzyme catalyses L-threonyl-[protein] + ATP = O-phospho-L-threonyl-[protein] + ADP + H(+). Functionally, serine/threonine-protein kinase which is required for checkpoint-mediated cell cycle arrest and activation of DNA repair in response to the presence of DNA damage or unreplicated DNA. May also negatively regulate cell cycle progression during unperturbed cell cycles. May phosphorylate the CDC25 phosphatase stg, which promotes its degradation. This results in increased inhibitory tyrosine phosphorylation of Cdk1-cyclin complexes and consequent inhibition of cell cycle progression. This is Serine/threonine-protein kinase grp from Drosophila melanogaster (Fruit fly).